Here is a 522-residue protein sequence, read N- to C-terminus: Zinc finger protein STOP1 homolog (522 aa).

2 stretches are compositionally biased toward polar residues: residues 1-12 (MDSGLGRSSETS) and 19-40 (MASN…SSMD). Disordered regions lie at residues 1-43 (MDSG…DQPP) and 234-260 (CGGE…EREN). Basic and acidic residues predominate over residues 244-260 (MEDHDVKESDDGGEREN). The segment at 282-304 (HFCLICGKGFKRDANLRMHMRGH) adopts a C2H2-type 1 zinc-finger fold. The segment at 390 to 421 (KHCGRDKWLCSCGTTFSRKDKLFGHVALFQGH) adopts a C2H2-type 2; atypical zinc-finger fold.

Its subcellular location is the nucleus. Probable transcription factor that may be involved in aluminum tolerance. This Oryza sativa subsp. japonica (Rice) protein is Zinc finger protein STOP1 homolog.